The sequence spans 719 residues: Probable 1-deoxy-D-xylulose-5-phosphate synthase, chloroplastic (719 aa).

Residues 1-57 (MALCAYAFPGILNRTVAVASDASKPTPLFSEWIHGTDLQFQFHQKLTQVKKRSRTVQ) constitute a chloroplast transit peptide. Thiamine diphosphate-binding positions include H145 and 186 to 188 (GHS). D217 contacts Mg(2+). Residues 218–219 (GA), N246, Y367, and E449 each bind thiamine diphosphate. N246 serves as a coordination point for Mg(2+).

Belongs to the transketolase family. DXPS subfamily. Homodimer. Mg(2+) is required as a cofactor. It depends on thiamine diphosphate as a cofactor.

The protein resides in the plastid. It is found in the chloroplast. The catalysed reaction is D-glyceraldehyde 3-phosphate + pyruvate + H(+) = 1-deoxy-D-xylulose 5-phosphate + CO2. It participates in metabolic intermediate biosynthesis; 1-deoxy-D-xylulose 5-phosphate biosynthesis; 1-deoxy-D-xylulose 5-phosphate from D-glyceraldehyde 3-phosphate and pyruvate: step 1/1. Functionally, catalyzes the acyloin condensation reaction between C atoms 2 and 3 of pyruvate and glyceraldehyde 3-phosphate to yield 1-deoxy-D-xylulose-5-phosphate (DXP). The polypeptide is Probable 1-deoxy-D-xylulose-5-phosphate synthase, chloroplastic (TKT2) (Capsicum annuum (Capsicum pepper)).